A 405-amino-acid chain; its full sequence is Formin-like protein 15a (405 aa).

The disordered stretch occupies residues 1–31; it reads MSLVEISGSDAMAAPMPGRVPPPPPRPPPMP. Over residues 18-31 the composition is skewed to pro residues; sequence GRVPPPPPRPPPMP. An FH2 domain is found at 52–405; sequence FPRPAKKRAS…VCWFFVRLMI (354 aa).

Belongs to the formin-like family. Class-II subfamily.

The sequence is that of Formin-like protein 15a (FH15A) from Arabidopsis thaliana (Mouse-ear cress).